The sequence spans 110 residues: Integration host factor subunit alpha (110 aa).

Belongs to the bacterial histone-like protein family. In terms of assembly, heterodimer of an alpha and a beta chain.

This protein is one of the two subunits of integration host factor, a specific DNA-binding protein that functions in genetic recombination as well as in transcriptional and translational control. The chain is Integration host factor subunit alpha from Bdellovibrio bacteriovorus (strain ATCC 15356 / DSM 50701 / NCIMB 9529 / HD100).